The sequence spans 159 residues: Ribosomal RNA large subunit methyltransferase H (159 aa).

Residues L76, G108, and 127 to 132 contribute to the S-adenosyl-L-methionine site; that span reads FSKMTF.

It belongs to the RNA methyltransferase RlmH family. Homodimer.

It localises to the cytoplasm. It catalyses the reaction pseudouridine(1915) in 23S rRNA + S-adenosyl-L-methionine = N(3)-methylpseudouridine(1915) in 23S rRNA + S-adenosyl-L-homocysteine + H(+). Functionally, specifically methylates the pseudouridine at position 1915 (m3Psi1915) in 23S rRNA. This chain is Ribosomal RNA large subunit methyltransferase H, found in Oceanobacillus iheyensis (strain DSM 14371 / CIP 107618 / JCM 11309 / KCTC 3954 / HTE831).